The sequence spans 191 residues: Orotate phosphoribosyltransferase (191 aa).

A 5-phospho-alpha-D-ribose 1-diphosphate-binding site is contributed by 114 to 122 (EDVITTGGS). Positions 118 and 146 each coordinate orotate.

This sequence belongs to the purine/pyrimidine phosphoribosyltransferase family. PyrE subfamily. Homodimer. Mg(2+) is required as a cofactor.

The enzyme catalyses orotidine 5'-phosphate + diphosphate = orotate + 5-phospho-alpha-D-ribose 1-diphosphate. It functions in the pathway pyrimidine metabolism; UMP biosynthesis via de novo pathway; UMP from orotate: step 1/2. Catalyzes the transfer of a ribosyl phosphate group from 5-phosphoribose 1-diphosphate to orotate, leading to the formation of orotidine monophosphate (OMP). This is Orotate phosphoribosyltransferase from Desulforamulus reducens (strain ATCC BAA-1160 / DSM 100696 / MI-1) (Desulfotomaculum reducens).